Consider the following 391-residue polypeptide: Zinc finger protein 414 (391 aa).

Positions 1 to 110 are disordered; that stretch reads MDEEPSGPSL…RRPPPGKQIP (110 aa). The span at 84–93 shows a compositional bias: polar residues; sequence GPTSTVSGTS. C2H2-type zinc fingers lie at residues 109-133, 145-169, and 176-201; these read IPCS…LRTH, FRCS…GKLH, and FKCE…CAEH. Disordered stretches follow at residues 201 to 243, 274 to 312, and 344 to 391; these read HAQS…LEPF, LAAA…SGHA, and HLED…FSPL. Residues 214–226 are compositionally biased toward basic and acidic residues; that stretch reads LDRESPASERPPE. Pro residues predominate over residues 227-236; it reads SDPAPAPGLP. Positions 274 to 286 are enriched in low complexity; the sequence is LAAAPGPPASSAA. Residues 326–348 form a C2H2-type 4 zinc finger; the sequence is YSCMQCAFSTASRPAMTLHLEDH. Over residues 353–372 the composition is skewed to pro residues; that stretch reads PAAPAPGQPRPDAPADPAPL.

This sequence belongs to the krueppel C2H2-type zinc-finger protein family.

Its subcellular location is the nucleus. Functionally, may be involved in transcriptional regulation. In Bos taurus (Bovine), this protein is Zinc finger protein 414 (ZNF414).